The sequence spans 160 residues: MAPK regulated corepressor interacting protein 2 (160 aa).

N-acetylmethionine is present on Met1. The tract at residues 1–22 (MYTITKGPSKLVAQRRTGPTQQ) is disordered. Residue Arg35 is modified to Omega-N-methylarginine. The segment at 43-64 (LPAHLQPSAQTQGPWPLASSGP) is disordered. Position 61 is a phosphoserine (Ser61). Residue Arg65 is modified to Omega-N-methylarginine. A Phosphoserine modification is found at Ser82.

It belongs to the MCRIP family. In terms of assembly, interacts with DDX6. Interacts with MCRIP1.

The protein resides in the cytoplasm. It localises to the stress granule. It is found in the nucleus. This is MAPK regulated corepressor interacting protein 2 (Mcrip2) from Mus musculus (Mouse).